A 637-amino-acid chain; its full sequence is DNA primase (637 aa).

A CHC2-type zinc finger spans residues cysteine 39–cysteine 63. One can recognise a Toprim domain in the interval histidine 257–aspartate 338. Positions 263, 307, and 309 each coordinate Mg(2+).

Belongs to the DnaG primase family. Monomer. Interacts with DnaB. Zn(2+) is required as a cofactor. Mg(2+) serves as cofactor.

It carries out the reaction ssDNA + n NTP = ssDNA/pppN(pN)n-1 hybrid + (n-1) diphosphate.. Its function is as follows. RNA polymerase that catalyzes the synthesis of short RNA molecules used as primers for DNA polymerase during DNA replication. The sequence is that of DNA primase from Lactococcus lactis subsp. lactis (strain IL1403) (Streptococcus lactis).